The primary structure comprises 501 residues: Glycerol kinase (501 aa).

Residue T16 participates in ADP binding. ATP-binding residues include T16, T17, and S18. T16 is a binding site for sn-glycerol 3-phosphate. R20 contributes to the ADP binding site. Positions 84, 85, 135, and 242 each coordinate sn-glycerol 3-phosphate. Glycerol contacts are provided by R84, E85, Y135, D242, and Q243. ADP contacts are provided by T264 and G307. ATP-binding residues include T264, G307, Q311, and G408. G408 is a binding site for ADP.

The protein belongs to the FGGY kinase family.

The catalysed reaction is glycerol + ATP = sn-glycerol 3-phosphate + ADP + H(+). It functions in the pathway polyol metabolism; glycerol degradation via glycerol kinase pathway; sn-glycerol 3-phosphate from glycerol: step 1/1. Key enzyme in the regulation of glycerol uptake and metabolism. Catalyzes the phosphorylation of glycerol to yield sn-glycerol 3-phosphate. This Saccharolobus islandicus (strain M.14.25 / Kamchatka #1) (Sulfolobus islandicus) protein is Glycerol kinase.